The chain runs to 71 residues: Large ribosomal subunit protein bL31 (71 aa).

Residues Cys16, Cys18, Cys37, and Cys40 each coordinate Zn(2+).

It belongs to the bacterial ribosomal protein bL31 family. Type A subfamily. As to quaternary structure, part of the 50S ribosomal subunit. Zn(2+) serves as cofactor.

Functionally, binds the 23S rRNA. The chain is Large ribosomal subunit protein bL31 from Pseudoalteromonas translucida (strain TAC 125).